Reading from the N-terminus, the 567-residue chain is Diphtheria toxin (567 aa).

The signal sequence occupies residues 1-32 (MLVRGYVVSRKLFASILIGALLGIGAPPSAHA). Positions 53 and 97 each coordinate NAD(+). Glu-180 is a catalytic residue. Intrachain disulfides connect Cys-218–Cys-233 and Cys-493–Cys-503.

Homodimer. Proteolytic activation by host furin cleaves the protein in two parts, Diphtheria toxin fragment A and Diphtheria toxin fragment B; which remain associated via a disulfide bond.

The catalysed reaction is diphthamide-[translation elongation factor 2] + NAD(+) = N-(ADP-D-ribosyl)diphthamide-[translation elongation factor 2] + nicotinamide + H(+). Its activity is regulated as follows. Partially inhibited by 1,8-naphthalimide (NAP). Diphtheria toxin, produced by a phage infecting Corynebacterium diphtheriae, is a proenzyme that, after activation, catalyzes the covalent attachment of the ADP ribose moiety of NAD to eukaryotic elongation factor 2 (eEF-2). Fragment A is the catalytic portion responsible for enzymatic ADP-ribosylation of elongation factor 2, while fragment B is responsible for binding of toxin to cell receptors and entry of fragment A. This is Diphtheria toxin from Corynebacterium diphtheriae.